Reading from the N-terminus, the 348-residue chain is Holliday junction branch migration complex subunit RuvB (348 aa).

The interval 1-183 is large ATPase domain (RuvB-L); it reads MTDPSRLVTP…FGIPVRLNFY (183 aa). ATP contacts are provided by residues Leu-22, Arg-23, Gly-64, Lys-67, Thr-68, Thr-69, 130 to 132, Arg-173, Tyr-183, and Arg-220; that span reads EDF. Thr-68 provides a ligand contact to Mg(2+). The segment at 184-254 is small ATPAse domain (RuvB-S); sequence TIEELESIVS…IADHALGALE (71 aa). Residues 257-348 form a head domain (RuvB-H) region; the sequence is AAGLDAMDRR…FGLFGGEEEA (92 aa). DNA is bound by residues Arg-293, Arg-312, and Arg-317.

The protein belongs to the RuvB family. In terms of assembly, homohexamer. Forms an RuvA(8)-RuvB(12)-Holliday junction (HJ) complex. HJ DNA is sandwiched between 2 RuvA tetramers; dsDNA enters through RuvA and exits via RuvB. An RuvB hexamer assembles on each DNA strand where it exits the tetramer. Each RuvB hexamer is contacted by two RuvA subunits (via domain III) on 2 adjacent RuvB subunits; this complex drives branch migration. In the full resolvosome a probable DNA-RuvA(4)-RuvB(12)-RuvC(2) complex forms which resolves the HJ.

It localises to the cytoplasm. The enzyme catalyses ATP + H2O = ADP + phosphate + H(+). Its function is as follows. The RuvA-RuvB-RuvC complex processes Holliday junction (HJ) DNA during genetic recombination and DNA repair, while the RuvA-RuvB complex plays an important role in the rescue of blocked DNA replication forks via replication fork reversal (RFR). RuvA specifically binds to HJ cruciform DNA, conferring on it an open structure. The RuvB hexamer acts as an ATP-dependent pump, pulling dsDNA into and through the RuvAB complex. RuvB forms 2 homohexamers on either side of HJ DNA bound by 1 or 2 RuvA tetramers; 4 subunits per hexamer contact DNA at a time. Coordinated motions by a converter formed by DNA-disengaged RuvB subunits stimulates ATP hydrolysis and nucleotide exchange. Immobilization of the converter enables RuvB to convert the ATP-contained energy into a lever motion, pulling 2 nucleotides of DNA out of the RuvA tetramer per ATP hydrolyzed, thus driving DNA branch migration. The RuvB motors rotate together with the DNA substrate, which together with the progressing nucleotide cycle form the mechanistic basis for DNA recombination by continuous HJ branch migration. Branch migration allows RuvC to scan DNA until it finds its consensus sequence, where it cleaves and resolves cruciform DNA. This is Holliday junction branch migration complex subunit RuvB from Rhodopseudomonas palustris (strain HaA2).